The following is a 338-amino-acid chain: High mobility group B protein 9 (338 aa).

In terms of domain architecture, ARID spans 38-129 (VKDSSVFWDT…LLFHYEQVHL (92 aa)). The disordered stretch occupies residues 233–259 (TGRRRRRLGKRRRSRRREDPNYPKPNR). Basic residues predominate over residues 235–247 (RRRRRLGKRRRSR). A DNA-binding region (HMG box) is located at residues 255–322 (PKPNRSGYNF…RYQRELNEYR (68 aa)).

As to expression, predominantly expressed in leaves, flowers and seedlings.

Its subcellular location is the nucleus. Its function is as follows. Binds preferentially DNA with A/T-rich content. Required for karyogamy during female gametophyte development, when the two polar nuclei fuse to form the diploid central cell nucleus. This chain is High mobility group B protein 9 (HMGB9), found in Arabidopsis thaliana (Mouse-ear cress).